The sequence spans 159 residues: Ribosome maturation factor RimP (159 aa).

Belongs to the RimP family.

It is found in the cytoplasm. Functionally, required for maturation of 30S ribosomal subunits. The sequence is that of Ribosome maturation factor RimP from Streptococcus pneumoniae serotype 2 (strain D39 / NCTC 7466).